Reading from the N-terminus, the 728-residue chain is Rho-related BTB domain-containing protein 2 (728 aa).

A rho-like region spans residues 1-210; the sequence is MDSDMDYERP…DNAIRAALIS (210 aa). Residues 21–28, 84–88, and 140–143 each bind GTP; these read GDNAVGKT, DTFGD, and CQLD. 2 BTB domains span residues 266-333 and 500-567; these read ADVI…HHHH and SDVT…TSSP. Gly residues predominate over residues 304 to 313; sequence ELGGPSGSGG. The interval 304–333 is disordered; sequence ELGGPSGSGGPRPEDHRSHPEQHHHHHHHH. Positions 315–324 are enriched in basic and acidic residues; it reads RPEDHRSHPE. The disordered stretch occupies residues 703 to 728; sequence FWNSPSSPSSSAAGSASPSSSSSAVV. A compositionally biased stretch (low complexity) spans 706 to 728; it reads SPSSPSSSAAGSASPSSSSSAVV.

The protein belongs to the small GTPase superfamily. Rho family. As to quaternary structure, interacts with HSP90AA1 and HSP90AB1. Forms a complex with CUL3 and RBX1. Interacts (via BTB 1 domain) with CUL3. Interacts with MSI2. Autoubiquitinated by RHOBTB2-CUL3-RBX1 ubiquitin ligase complex. Expressed in most tissues, with highest expression in brain.

Functionally, regulator of cell proliferation and apoptosis. It likely functions as a substrate-adapter that recruits key substrates, e.g. MSI2, to CUL3-based ubiquitin ligase complexes for degradation. Required for MSI2 ubiquitination and degradation. The protein is Rho-related BTB domain-containing protein 2 (Rhobtb2) of Mus musculus (Mouse).